The following is a 178-amino-acid chain: FXYD domain-containing ion transport regulator 5 (178 aa).

The N-terminal stretch at 1-21 (MSPSGRLCLLTIVGLILPTRG) is a signal peptide. The Extracellular segment spans residues 22–145 (QTLKDTTSSS…FYDEHTLRKR (124 aa)). A disordered region spans residues 23–131 (TLKDTTSSSS…QTLKPSGFHE (109 aa)). 2 stretches are compositionally biased toward low complexity: residues 26–36 (DTTSSSSADST) and 68–77 (TPQPQTQTQQ). The span at 103-125 (DTTTLSERPSPSTDVQTDPQTLK) shows a compositional bias: polar residues. The helical transmembrane segment at 146 to 164 (GLLVAAVLFITGIIILTSG) threads the bilayer. At 165-178 (KCRQLSRLCRNRCR) the chain is on the cytoplasmic side.

This sequence belongs to the FXYD family. In terms of assembly, regulatory subunit of the sodium/potassium-transporting ATPase which is composed of a catalytic alpha subunit, a non-catalytic beta subunit and an additional regulatory subunit. The regulatory subunit, a member of the FXYD protein family, modulates the enzymatic activity in a tissue- and isoform-specific way by changing affinities of the Na+/K+-ATPase toward Na(+), K(+) or ATP. Glycosylated.

The protein localises to the cell membrane. The protein resides in the basolateral cell membrane. Its function is as follows. Associates with and regulates the activity of the sodium/potassium-transporting ATPase (NKA) which catalyzes the hydrolysis of ATP coupled with the exchange of Na(+) and K(+) ions across the plasma membrane. May increase NKA activity by increasing the apparent affinity for Na(+). Involved in down-regulation of E-cadherin which results in reduced cell adhesion. Promotes metastasis. The sequence is that of FXYD domain-containing ion transport regulator 5 (FXYD5) from Homo sapiens (Human).